The following is a 55-amino-acid chain: Small integral membrane protein 27 (55 aa).

Residues Trp11 to Ala31 form a helical membrane-spanning segment.

It localises to the membrane. This is Small integral membrane protein 27 from Homo sapiens (Human).